Here is a 549-residue protein sequence, read N- to C-terminus: Urocanate hydratase (549 aa).

Residues 46-47, Gln124, 170-172, Glu190, Arg195, 236-237, 257-261, 267-268, and Tyr316 each bind NAD(+); these read GG, GMG, NA, QTSAH, and YV. The active site involves Cys404. Residue Gly486 coordinates NAD(+).

This sequence belongs to the urocanase family. The cofactor is NAD(+).

Its subcellular location is the cytoplasm. It catalyses the reaction 4-imidazolone-5-propanoate = trans-urocanate + H2O. It functions in the pathway amino-acid degradation; L-histidine degradation into L-glutamate; N-formimidoyl-L-glutamate from L-histidine: step 2/3. In terms of biological role, catalyzes the conversion of urocanate to 4-imidazolone-5-propionate. The protein is Urocanate hydratase of Caldanaerobacter subterraneus subsp. tengcongensis (strain DSM 15242 / JCM 11007 / NBRC 100824 / MB4) (Thermoanaerobacter tengcongensis).